The following is a 364-amino-acid chain: Deoxyribonuclease-2-alpha (364 aa).

A signal peptide spans 1–21 (MATLSPLLLAALLWVPVGTLT). Cysteine 22 and cysteine 161 are joined by a disulfide. 6 N-linked (GlcNAc...) asparagine glycosylation sites follow: asparagine 72, asparagine 88, asparagine 171, asparagine 214, asparagine 268, and asparagine 292. Cystine bridges form between cysteine 269–cysteine 349 and cysteine 310–cysteine 329. Residue histidine 297 is part of the active site.

The protein belongs to the DNase II family.

The protein localises to the lysosome. The catalysed reaction is Endonucleolytic cleavage to nucleoside 3'-phosphates and 3'-phosphooligonucleotide end-products.. Functionally, hydrolyzes DNA under acidic conditions with a preference for double-stranded DNA. Plays a major role in the clearance of nucleic acids generated through apoptosis, hence preventing autoinflammation. Necessary for proper fetal development and for definitive erythropoiesis in fetal liver and bone marrow, where it degrades nuclear DNA expelled from erythroid precursor cells. This Sus scrofa (Pig) protein is Deoxyribonuclease-2-alpha (DNASE2).